A 136-amino-acid polypeptide reads, in one-letter code: UPF0225 protein Mpe_A2093 (136 aa).

Belongs to the UPF0225 family.

The chain is UPF0225 protein Mpe_A2093 from Methylibium petroleiphilum (strain ATCC BAA-1232 / LMG 22953 / PM1).